Here is a 411-residue protein sequence, read N- to C-terminus: Anaerobic nitric oxide reductase flavorubredoxin homolog (411 aa).

The zinc metallo-hydrolase stretch occupies residues 30 to 210 (LRGSSYNSYL…PFSRLVTPKI (181 aa)). Fe cation is bound by residues His79, Glu81, Asp83, His147, Asp166, His227, Cys360, Cys363, Cys393, and Cys396. One can recognise a Rubredoxin-like domain in the interval 355 to 406 (GPRMQCSVCQWIYDPAKGEPMQDVAPGTPWSEVPDNFLCPECSLGKDVFDEL).

The protein in the N-terminal section; belongs to the zinc metallo-hydrolase group 3 family. As to quaternary structure, homotetramer. The cofactor is Fe cation.

The protein localises to the cytoplasm. It participates in nitrogen metabolism; nitric oxide reduction. In terms of biological role, anaerobic nitric oxide reductase; uses NADH to detoxify nitric oxide (NO), protecting several 4Fe-4S NO-sensitive enzymes. Has at least 2 reductase partners, only one of which (NorW, flavorubredoxin reductase) has been identified. NO probably binds to the di-iron center. Also able to function as an aerobic oxygen reductase. The chain is Anaerobic nitric oxide reductase flavorubredoxin homolog from Escherichia coli O157:H7.